Here is a 146-residue protein sequence, read N- to C-terminus: MTLGSGGSSVVVPRNFRLLEELERGEKGIGDGTVSYGMDDGDDIYMRSWTGTIIGPHNTVHEGRIYQLKLFCDKDYPEKPPTVRFHSRVNMACVNHETGVVDPKKFGLLANWQREYTMEDILVQLKKEMSTSHNRKLVQPPEGTCF.

The UBC core domain maps to 13–146; the sequence is PRNFRLLEEL…LVQPPEGTCF (134 aa).

The protein belongs to the ubiquitin-conjugating enzyme family. Heterodimer with UBC35 or UBC36. In terms of tissue distribution, expressed in roots, shoots, leaves, stems, flowers and pollen.

In terms of biological role, has no ubiquitin ligase activity on its own. The heterodimer with UBC catalyzes the synthesis of non-canonical poly-ubiquitin chains that are linked through 'Lys-63'. This type of poly-ubiquitination does not lead to protein degradation by the proteasome. Mediates transcriptional activation of target genes. May play a role in the control of progress through the cell cycle and differentiation. Involved in the error-free DNA repair pathway and contributes to the survival of cells after DNA damage. The sequence is that of Ubiquitin-conjugating enzyme E2 variant 1D (UEV1D) from Arabidopsis thaliana (Mouse-ear cress).